Consider the following 34-residue polypeptide: Potassium channel toxin (34 aa).

3 cysteine pairs are disulfide-bonded: Cys6–Cys25, Cys11–Cys29, and Cys15–Cys31.

This sequence belongs to the short scorpion toxin superfamily. Potassium channel inhibitor family. Alpha-KTx 21 subfamily. As to expression, expressed by the venom gland.

Its subcellular location is the secreted. In terms of biological role, toxin that blocks voltage-gated potassium channels (Kv). This is Potassium channel toxin from Tityus metuendus (Scorpion).